Here is a 417-residue protein sequence, read N- to C-terminus: MSSLDAVVHGARELVVGPAAGGDTLETHADGAVAVVDGAVAAVGDTADVLAAYPAENATTAIDATGKTVLPGFVDPHTHALFAGDRSDEFAAKLRGKPYQEILAEGGGILRTVDAVRAASDAALVANLTAQLDVMLAHGTTTAEVKTGYGLDTETECRMLDAIAAAAAEHPVDVVTTFLGAHAVPDDTDADAYVDAVIDDQLPAAANGPARFCDVFCEADVFTVEQSRRILDAGREHGLAPKLHAEEFTRLGGAQLAADLGATSADHLLHATPEDAAALADAGVTPVLLPATAFVLDEAYADPQQFLAAADNRTGAPVALGTDLNPNCYTHSMGFVVSLACNGMRMAPADAVLAATAWAASALDRGRDGTGTLREGTDGDVLVVDAPSHVHLPYNPGVNNVEAVLTDGTVAVGGGGA.

Positions 77 and 79 each coordinate Fe(3+). Zn(2+) is bound by residues H77 and H79. 4-imidazolone-5-propanoate is bound by residues R86, Y149, and H182. Position 149 (Y149) interacts with N-formimidoyl-L-glutamate. H244 is a binding site for Fe(3+). H244 contributes to the Zn(2+) binding site. 4-imidazolone-5-propanoate is bound at residue E247. D323 contacts Fe(3+). Residue D323 participates in Zn(2+) binding. Residue N325 coordinates N-formimidoyl-L-glutamate.

This sequence belongs to the metallo-dependent hydrolases superfamily. HutI family. The cofactor is Zn(2+). Fe(3+) serves as cofactor.

It localises to the cytoplasm. The enzyme catalyses 4-imidazolone-5-propanoate + H2O = N-formimidoyl-L-glutamate. Its pathway is amino-acid degradation; L-histidine degradation into L-glutamate; N-formimidoyl-L-glutamate from L-histidine: step 3/3. Functionally, catalyzes the hydrolytic cleavage of the carbon-nitrogen bond in imidazolone-5-propanoate to yield N-formimidoyl-L-glutamate. It is the third step in the universal histidine degradation pathway. The chain is Imidazolonepropionase from Halobacterium salinarum (strain ATCC 29341 / DSM 671 / R1).